The sequence spans 446 residues: Na(+)-translocating NADH-quinone reductase subunit A (446 aa).

Belongs to the NqrA family. As to quaternary structure, composed of six subunits; NqrA, NqrB, NqrC, NqrD, NqrE and NqrF.

The catalysed reaction is a ubiquinone + n Na(+)(in) + NADH + H(+) = a ubiquinol + n Na(+)(out) + NAD(+). NQR complex catalyzes the reduction of ubiquinone-1 to ubiquinol by two successive reactions, coupled with the transport of Na(+) ions from the cytoplasm to the periplasm. NqrA to NqrE are probably involved in the second step, the conversion of ubisemiquinone to ubiquinol. The sequence is that of Na(+)-translocating NADH-quinone reductase subunit A from Psychromonas ingrahamii (strain DSM 17664 / CCUG 51855 / 37).